The following is a 36-amino-acid chain: Photosystem II reaction center protein M (36 aa).

Residues 5–25 (ILGVIAVALFILIPTSFLLIL) form a helical membrane-spanning segment.

Belongs to the PsbM family. In terms of assembly, PSII is composed of 1 copy each of membrane proteins PsbA, PsbB, PsbC, PsbD, PsbE, PsbF, PsbH, PsbI, PsbJ, PsbK, PsbL, PsbM, PsbT, PsbY, PsbZ, Psb30/Ycf12, at least 3 peripheral proteins of the oxygen-evolving complex and a large number of cofactors. It forms dimeric complexes.

It is found in the plastid. Its subcellular location is the chloroplast thylakoid membrane. In terms of biological role, one of the components of the core complex of photosystem II (PSII). PSII is a light-driven water:plastoquinone oxidoreductase that uses light energy to abstract electrons from H(2)O, generating O(2) and a proton gradient subsequently used for ATP formation. It consists of a core antenna complex that captures photons, and an electron transfer chain that converts photonic excitation into a charge separation. This subunit is found at the monomer-monomer interface. In Bigelowiella natans (Pedinomonas minutissima), this protein is Photosystem II reaction center protein M.